Here is a 56-residue protein sequence, read N- to C-terminus: Serine protease inhibitor Kazal-type 1 (56 aa).

The Kazal-like domain occupies 3 to 56; sequence PQREATCTSEVSGCPKIYNPVCGTDGITYSNECVLCSENKKRQTPVLIQKSGPC. 3 disulfide bridges follow: Cys9-Cys38, Cys16-Cys35, and Cys24-Cys56.

It is found in the secreted. Its function is as follows. Serine protease inhibitor which exhibits anti-trypsin activity. In the pancreas, protects against trypsin-catalyzed premature activation of zymogens. In terms of biological role, in the male reproductive tract, binds to sperm heads where it modulates sperm capacitance by inhibiting calcium uptake and nitrogen oxide (NO) production. The sequence is that of Serine protease inhibitor Kazal-type 1 (SPINK1) from Sus scrofa (Pig).